Here is a 355-residue protein sequence, read N- to C-terminus: Protein RecA (355 aa).

An ATP-binding site is contributed by G66–T73. The tract at residues D331 to E355 is disordered. Acidic residues predominate over residues V332–Q344.

The protein belongs to the RecA family.

It localises to the cytoplasm. Can catalyze the hydrolysis of ATP in the presence of single-stranded DNA, the ATP-dependent uptake of single-stranded DNA by duplex DNA, and the ATP-dependent hybridization of homologous single-stranded DNAs. It interacts with LexA causing its activation and leading to its autocatalytic cleavage. The chain is Protein RecA from Latilactobacillus sakei subsp. sakei (strain 23K) (Lactobacillus sakei subsp. sakei).